We begin with the raw amino-acid sequence, 321 residues long: Lipoyl synthase (321 aa).

Residues Cys-60, Cys-65, Cys-71, Cys-86, Cys-90, Cys-93, and Ser-299 each coordinate [4Fe-4S] cluster. The Radical SAM core domain maps to 72–288; it reads WEKKHATFMI…ETIGRTKGFL (217 aa).

The protein belongs to the radical SAM superfamily. Lipoyl synthase family. The cofactor is [4Fe-4S] cluster.

Its subcellular location is the cytoplasm. It carries out the reaction [[Fe-S] cluster scaffold protein carrying a second [4Fe-4S](2+) cluster] + N(6)-octanoyl-L-lysyl-[protein] + 2 oxidized [2Fe-2S]-[ferredoxin] + 2 S-adenosyl-L-methionine + 4 H(+) = [[Fe-S] cluster scaffold protein] + N(6)-[(R)-dihydrolipoyl]-L-lysyl-[protein] + 4 Fe(3+) + 2 hydrogen sulfide + 2 5'-deoxyadenosine + 2 L-methionine + 2 reduced [2Fe-2S]-[ferredoxin]. Its pathway is protein modification; protein lipoylation via endogenous pathway; protein N(6)-(lipoyl)lysine from octanoyl-[acyl-carrier-protein]: step 2/2. Its function is as follows. Catalyzes the radical-mediated insertion of two sulfur atoms into the C-6 and C-8 positions of the octanoyl moiety bound to the lipoyl domains of lipoate-dependent enzymes, thereby converting the octanoylated domains into lipoylated derivatives. The protein is Lipoyl synthase of Mesorhizobium japonicum (strain LMG 29417 / CECT 9101 / MAFF 303099) (Mesorhizobium loti (strain MAFF 303099)).